Here is a 139-residue protein sequence, read N- to C-terminus: Ribonuclease P/MRP protein subunit POP5 (139 aa).

Belongs to the eukaryotic/archaeal RNase P protein component 2 family.

The protein localises to the nucleus. It carries out the reaction Endonucleolytic cleavage of RNA, removing 5'-extranucleotides from tRNA precursor.. Functionally, component of ribonuclease P, a protein complex that generates mature tRNA molecules by cleaving their 5'-ends. Also a component of RNase MRP, which cleaves pre-rRNA sequences. In Schizosaccharomyces pombe (strain 972 / ATCC 24843) (Fission yeast), this protein is Ribonuclease P/MRP protein subunit POP5.